Consider the following 775-residue polypeptide: Melanoma-associated antigen D1 (775 aa).

The segment at 37–330 (SEAPPTSQAT…PARQTPSAWQ (294 aa)) is disordered. Residues 39-50 (APPTSQATAAAS) are compositionally biased toward low complexity. Polar residues-rich tracts occupy residues 52 to 63 (PNASPQSSQPPT), 84 to 100 (KAQNATTKGPNDYSQAR), 107 to 120 (KNQSKAAFKSQNGT), 149 to 178 (GQNSTKAGPGTTYNFPQSPSANEMTNNQPK), 221 to 235 (AQTSADGSQTQNVES), 247 to 258 (VNNLNVEENNSG), and 296 to 308 (LAWQNPSGWQNQT). 19 repeat units span residues 292 to 297 (WQTPLA), 298 to 303 (WQNPSG), 304 to 309 (WQNQTA), 329 to 334 (WQNPVA), 335 to 340 (WQNPVI), 341 to 346 (WPNPVI), 347 to 352 (WQNPVI), 353 to 358 (WPNPIV), 359 to 364 (WPGPIV), 365 to 370 (WPNPMA), 371 to 376 (WQSTPG), 377 to 382 (WQSPPS), 383 to 388 (WQAPPS), 389 to 394 (WQSPQD), 395 to 400 (WQGPPD), 401 to 406 (WQVPPD), 407 to 412 (WSMPPD), 413 to 418 (WSFPSD), and 419 to 424 (WPFPPD). The segment at 292–441 (WQTPLAWQNP…IPPDWQNLRP (150 aa)) is 22 X 6 AA tandem repeats of W-[PQ]-X-P-X-X. Residues 309-326 (ARQTPPAARQSPPARQTP) show a composition bias toward low complexity. The tract at residues 374 to 409 (TPGWQSPPSWQAPPSWQSPQDWQGPPDWQVPPDWSM) is disordered. The segment covering 375-406 (PGWQSPPSWQAPPSWQSPQDWQGPPDWQVPPD) has biased composition (low complexity). A 20; approximate repeat occupies 425-429 (WIPAD). A run of 2 repeats spans residues 430 to 435 (WPIPPD) and 436 to 441 (WQNLRP). Positions 437–452 (QNLRPSPNLRSSSNSR) are enriched in low complexity. The segment at 437-463 (QNLRPSPNLRSSSNSRASQNQGPPQPR) is disordered. Residues 468–666 (LQERANKLVK…RDWTAQFMEA (199 aa)) enclose the MAGE domain.

In terms of assembly, interacts with DLX5, DLX7 and MSX2 and forms homomultimers. Interacts with UNC5A. Interacts with TRIM28 and PJA1. Interacts with NGFR/p75NTR and RORA. In terms of tissue distribution, ubiquitously expressed in many adult tissues, except for the spleen. Expressed in osteoblastic and chondrogenic cell lines and also during embryonic development.

The protein resides in the nucleus. It is found in the cytoplasm. It localises to the cell membrane. Involved in the apoptotic response after nerve growth factor (NGF) binding in neuronal cells. Inhibits cell cycle progression, and facilitates NGFR-mediated apoptosis. May act as a regulator of the function of DLX family members. May enhance ubiquitin ligase activity of RING-type zinc finger-containing E3 ubiquitin-protein ligases. Proposed to act through recruitment and/or stabilization of the Ubl-conjugating enzyme (E2) at the E3:substrate complex. Plays a role in the circadian rhythm regulation. May act as RORA coregulator, modulating the expression of core clock genes such as BMAL1 and NFIL3, induced, or NR1D1, repressed. This Mus musculus (Mouse) protein is Melanoma-associated antigen D1 (Maged1).